The following is a 176-amino-acid chain: dCTP deaminase (176 aa).

DCTP-binding positions include 99–104 and Asp115; that span reads RSTLAR. Glu125 serves as the catalytic Proton donor/acceptor. A dCTP-binding site is contributed by Gln163.

Belongs to the dCTP deaminase family. In terms of assembly, homotrimer.

It catalyses the reaction dCTP + H2O + H(+) = dUTP + NH4(+). The protein operates within pyrimidine metabolism; dUMP biosynthesis; dUMP from dCTP (dUTP route): step 1/2. Catalyzes the deamination of dCTP to dUTP. The chain is dCTP deaminase from Pyrobaculum calidifontis (strain DSM 21063 / JCM 11548 / VA1).